Consider the following 254-residue polypeptide: Peptide methionine sulfoxide reductase A5 (254 aa).

Positions 1 to 26 (MARGSAAAAIAGVVWVLLLLVGVASG) are cleaved as a signal peptide.

Belongs to the MsrA Met sulfoxide reductase family.

The enzyme catalyses L-methionyl-[protein] + [thioredoxin]-disulfide + H2O = L-methionyl-(S)-S-oxide-[protein] + [thioredoxin]-dithiol. The catalysed reaction is [thioredoxin]-disulfide + L-methionine + H2O = L-methionine (S)-S-oxide + [thioredoxin]-dithiol. Functionally, catalyzes the reduction of methionine sulfoxide (MetSO) to methionine in proteins. Plays a protective role against oxidative stress by restoring activity to proteins that have been inactivated by methionine oxidation. MSRA family specifically reduces the MetSO S-enantiomer. The polypeptide is Peptide methionine sulfoxide reductase A5 (MSRA5) (Oryza sativa subsp. japonica (Rice)).